The following is a 161-amino-acid chain: Type II secretion system protein M (161 aa).

Residues 1–16 (MHNLLALWQQRTRRER) are Cytoplasmic-facing. The helical transmembrane segment at 17 to 36 (CLLLGMAVVLLIGLVYYTLW) threads the bilayer. The Periplasmic segment spans residues 37 to 161 (QPWQNREAQW…TLVLERSDEK (125 aa)).

Belongs to the GSP M family. As to quaternary structure, type II secretion system is composed of four main components: the outer membrane complex, the inner membrane complex, the cytoplasmic secretion ATPase and the periplasm-spanning pseudopilus. Forms homodimers. Interacts with PulL/GspL. Interacts with PulE/GspE and PulF/GspF.

It is found in the cell inner membrane. Functionally, inner membrane component of the type II secretion system required for the energy-dependent secretion of extracellular factors such as proteases and toxins from the periplasm. Plays a role in the complex assembly and recruits PulL resulting in a stable complex in the inner membrane. Provides thus a link between the energy-providing PulE protein in the cytoplasm and the rest of the T2SS machinery. In Klebsiella pneumoniae, this protein is Type II secretion system protein M (pulM).